Reading from the N-terminus, the 288-residue chain is Nucleotide-binding protein ASA_0318 (288 aa).

An ATP-binding site is contributed by Gly8–Thr15. Asp56–Asn59 contributes to the GTP binding site.

It belongs to the RapZ-like family.

Displays ATPase and GTPase activities. This chain is Nucleotide-binding protein ASA_0318, found in Aeromonas salmonicida (strain A449).